Reading from the N-terminus, the 183-residue chain is Hypoxanthine/guanine phosphoribosyltransferase (183 aa).

Belongs to the purine/pyrimidine phosphoribosyltransferase family. Archaeal HPRT subfamily. As to quaternary structure, homodimer.

It is found in the cytoplasm. The catalysed reaction is IMP + diphosphate = hypoxanthine + 5-phospho-alpha-D-ribose 1-diphosphate. It catalyses the reaction GMP + diphosphate = guanine + 5-phospho-alpha-D-ribose 1-diphosphate. It functions in the pathway purine metabolism; IMP biosynthesis via salvage pathway; IMP from hypoxanthine: step 1/1. In terms of biological role, catalyzes a salvage reaction resulting in the formation of IMP that is energically less costly than de novo synthesis. In Methanocaldococcus jannaschii (strain ATCC 43067 / DSM 2661 / JAL-1 / JCM 10045 / NBRC 100440) (Methanococcus jannaschii), this protein is Hypoxanthine/guanine phosphoribosyltransferase.